The chain runs to 342 residues: Holliday junction branch migration complex subunit RuvB (342 aa).

Positions 1 to 179 (MTNILSPEKS…FGIPMRLNFY (179 aa)) are large ATPase domain (RuvB-L). ATP contacts are provided by residues isoleucine 18, arginine 19, glycine 60, lysine 63, threonine 64, threonine 65, 126-128 (EDF), arginine 169, tyrosine 179, and arginine 216. Mg(2+) is bound at residue threonine 64. Residues 180–250 (NTEELKKVLN…ISDFGLNRLE (71 aa)) form a small ATPAse domain (RuvB-S) region. The head domain (RuvB-H) stretch occupies residues 253–342 (CIGLDSNDYR…HQFNIFNENE (90 aa)). DNA-binding residues include arginine 289, arginine 308, and arginine 313.

It belongs to the RuvB family. Homohexamer. Forms an RuvA(8)-RuvB(12)-Holliday junction (HJ) complex. HJ DNA is sandwiched between 2 RuvA tetramers; dsDNA enters through RuvA and exits via RuvB. An RuvB hexamer assembles on each DNA strand where it exits the tetramer. Each RuvB hexamer is contacted by two RuvA subunits (via domain III) on 2 adjacent RuvB subunits; this complex drives branch migration. In the full resolvosome a probable DNA-RuvA(4)-RuvB(12)-RuvC(2) complex forms which resolves the HJ.

Its subcellular location is the cytoplasm. The enzyme catalyses ATP + H2O = ADP + phosphate + H(+). Functionally, the RuvA-RuvB-RuvC complex processes Holliday junction (HJ) DNA during genetic recombination and DNA repair, while the RuvA-RuvB complex plays an important role in the rescue of blocked DNA replication forks via replication fork reversal (RFR). RuvA specifically binds to HJ cruciform DNA, conferring on it an open structure. The RuvB hexamer acts as an ATP-dependent pump, pulling dsDNA into and through the RuvAB complex. RuvB forms 2 homohexamers on either side of HJ DNA bound by 1 or 2 RuvA tetramers; 4 subunits per hexamer contact DNA at a time. Coordinated motions by a converter formed by DNA-disengaged RuvB subunits stimulates ATP hydrolysis and nucleotide exchange. Immobilization of the converter enables RuvB to convert the ATP-contained energy into a lever motion, pulling 2 nucleotides of DNA out of the RuvA tetramer per ATP hydrolyzed, thus driving DNA branch migration. The RuvB motors rotate together with the DNA substrate, which together with the progressing nucleotide cycle form the mechanistic basis for DNA recombination by continuous HJ branch migration. Branch migration allows RuvC to scan DNA until it finds its consensus sequence, where it cleaves and resolves cruciform DNA. The polypeptide is Holliday junction branch migration complex subunit RuvB (Rickettsia africae (strain ESF-5)).